The sequence spans 82 residues: High-potential iron-sulfur protein (82 aa).

Residues C42, C45, C60, and C74 each contribute to the [4Fe-4S] cluster site.

It belongs to the high-potential iron-sulfur protein (HiPIP) family. In terms of assembly, homodimer.

The protein resides in the periplasm. Its function is as follows. Specific class of high-redox-potential 4Fe-4S ferredoxins. Functions in anaerobic electron transport in most purple and in some other photosynthetic bacteria and in at least one genus (Paracoccus) of halophilic, denitrifying bacteria. This chain is High-potential iron-sulfur protein (hip), found in Marichromatium purpuratum (Chromatium purpuratum).